The primary structure comprises 210 residues: MPGVKLTTQAYCKMVLHGAKYPHCAVNGLLVAEKQKPRKEHLPLGGPGAHHTLFVDCIPLFHGTLALAPMLEVALTLIDSWCKDHSYVIAGYYQANERVKDASPNQVAEKVASRIAEGFSDTALIMVDNTKFTMDCVAPTIHVYEHHENRWRCRDPHHDYCEDWPEAQRISASLLDSRSYETLVDFDNHLDDIRNDWTNPEINKAVLHLC.

The 147-residue stretch at 4 to 150 folds into the MPN domain; the sequence is VKLTTQAYCK…IHVYEHHENR (147 aa).

Belongs to the EMC8/EMC9 family. As to quaternary structure, component of the ER membrane protein complex (EMC). EMC8 and EMC9 are mutually exclusive subunits of the EMC complex. Expressed in liver, pancreas, heart, lung, kidney, brain, skeletal muscle, and placenta. Expression levels are highest in pancreas and moderate in heart, skeletal muscle, and placenta.

The protein localises to the endoplasmic reticulum membrane. Part of the endoplasmic reticulum membrane protein complex (EMC) that enables the energy-independent insertion into endoplasmic reticulum membranes of newly synthesized membrane proteins. Preferentially accommodates proteins with transmembrane domains that are weakly hydrophobic or contain destabilizing features such as charged and aromatic residues. Involved in the cotranslational insertion of multi-pass membrane proteins in which stop-transfer membrane-anchor sequences become ER membrane spanning helices. It is also required for the post-translational insertion of tail-anchored/TA proteins in endoplasmic reticulum membranes. By mediating the proper cotranslational insertion of N-terminal transmembrane domains in an N-exo topology, with translocated N-terminus in the lumen of the ER, controls the topology of multi-pass membrane proteins like the G protein-coupled receptors. By regulating the insertion of various proteins in membranes, it is indirectly involved in many cellular processes. This chain is ER membrane protein complex subunit 8 (EMC8), found in Homo sapiens (Human).